A 251-amino-acid polypeptide reads, in one-letter code: Flap endonuclease Xni (251 aa).

D104 lines the Mg(2+) pocket. The 5'-3' exonuclease domain maps to 160–249 (VQPQQLPDYW…IDGNLQQLRL (90 aa)). Residues L171, A172, P180, V182, and I185 each contribute to the K(+) site. The interval 184–189 (GIGPKS) is interaction with DNA.

This sequence belongs to the Xni family. Mg(2+) serves as cofactor. It depends on K(+) as a cofactor.

Has flap endonuclease activity. During DNA replication, flap endonucleases cleave the 5'-overhanging flap structure that is generated by displacement synthesis when DNA polymerase encounters the 5'-end of a downstream Okazaki fragment. The chain is Flap endonuclease Xni from Escherichia coli O6:K15:H31 (strain 536 / UPEC).